Here is a 551-residue protein sequence, read N- to C-terminus: Chaperonin GroEL 2 (551 aa).

ATP is bound by residues 30–33, K51, 87–91, G415, and D496; these read TLGP and DGTTT.

Belongs to the chaperonin (HSP60) family. In terms of assembly, forms a cylinder of 14 subunits composed of two heptameric rings stacked back-to-back. Interacts with the co-chaperonin GroES.

It is found in the cytoplasm. It carries out the reaction ATP + H2O + a folded polypeptide = ADP + phosphate + an unfolded polypeptide.. Together with its co-chaperonin GroES, plays an essential role in assisting protein folding. The GroEL-GroES system forms a nano-cage that allows encapsulation of the non-native substrate proteins and provides a physical environment optimized to promote and accelerate protein folding. The protein is Chaperonin GroEL 2 of Rhodopseudomonas palustris (strain BisB18).